The primary structure comprises 1010 residues: Plasma membrane ATPase 2 (1010 aa).

Basic and acidic residues predominate over residues 1-14 (MQRNNGEGRPEGMH). Disordered regions lie at residues 1-126 (MQRN…EDED) and 139-165 (QDQE…PEEL). The Cytoplasmic portion of the chain corresponds to 1–201 (MQRNNGEGRP…KEEKTNNIKK (201 aa)). Polar residues predominate over residues 25–34 (FKNNASPQDD). Over residues 42 to 52 (YEEGGVEDSAV) the composition is skewed to acidic residues. A compositionally biased stretch (polar residues) spans 68–106 (APNTHAQQANLQSGNTSITHETQSTSRGQEATTSPSLSA). Acidic residues predominate over residues 140–151 (DQEEEQVEEEES). The helical transmembrane segment at 202–222 (FLSFFVGPIQFVMELAAALAA) threads the bilayer. Residues 223–226 (GLRD) are Extracellular-facing. The chain crosses the membrane as a helical span at residues 227 to 246 (WVDFGVICALLLLNATVGFV). The Cytoplasmic portion of the chain corresponds to 247 to 377 (QEYQAGSIVD…SQGHFTEVLN (131 aa)). The helical transmembrane segment at 378–399 (GIGTILLVLVILTLLCIYTAAF) threads the bilayer. At 400–410 (YRSVRLAALLE) the chain is on the extracellular side. A helical membrane pass occupies residues 411–433 (YTLAITIIGVPVGLPAVVTTTMA). The Cytoplasmic segment spans residues 434–805 (VGAAYLAKKK…LIIRNQLLNL (372 aa)). Asp464 serves as the catalytic 4-aspartylphosphate intermediate. Mg(2+) contacts are provided by Asp720 and Asp724. The helical transmembrane segment at 806–824 (ELIVFIAIFADVATLAIAY) threads the bilayer. Over 825 to 840 (DNAPYAMKPVKWNLPR) the chain is Extracellular. Residues 841-860 (LWGLATIVGILLAIGTWIVN) traverse the membrane as a helical segment. Over 861–912 (TTMIAQGQNRGIVQNFGVQDEVLFLQISLTENWLIFITRCSGPFWSSFPSWQ) the chain is Cytoplasmic. The chain crosses the membrane as a helical span at residues 913-933 (LSGAVLVVDILATLFCIFGWF). The Extracellular segment spans residues 934-946 (KGGHQTSIVAVIR). A helical membrane pass occupies residues 947–963 (IWMYSFGIFCLIAGVYY). At 964–1010 (ILSESSSFDRWMHGKHKERGTTRKLEDFVMQLQRTSTHHEAEGKVTS) the chain is on the cytoplasmic side.

This sequence belongs to the cation transport ATPase (P-type) (TC 3.A.3) family. Type IIIA subfamily. In addition to transient phosphorylation of the active site Asp residue, this protein, but not the product of the pma1 locus, is phosphorylated efficiently in isolated plasma membrane.

Its subcellular location is the cell membrane. It carries out the reaction ATP + H2O + H(+)(in) = ADP + phosphate + 2 H(+)(out). Functionally, the plasma membrane ATPase of plants and fungi is a hydrogen ion pump. The proton gradient it generates drives the active transport of nutrients by H(+)-symport. The resulting external acidification and/or internal alkinization may mediate growth responses. This is Plasma membrane ATPase 2 (pma2) from Schizosaccharomyces pombe (strain 972 / ATCC 24843) (Fission yeast).